Reading from the N-terminus, the 350-residue chain is Flap endonuclease 1 (350 aa).

The N-domain stretch occupies residues 1–102 (MGVTELGKLI…IEIEKRRRVR (102 aa)). Mg(2+)-binding residues include D31, D84, E156, E158, D177, D179, and D241. The segment at 120–263 (EARKYAQRAL…RALRLIQEYG (144 aa)) is I-domain.

This sequence belongs to the XPG/RAD2 endonuclease family. FEN1 subfamily. As to quaternary structure, interacts with PCNA. PCNA stimulates the nuclease activity without altering cleavage specificity. Mg(2+) is required as a cofactor.

In terms of biological role, structure-specific nuclease with 5'-flap endonuclease and 5'-3' exonuclease activities involved in DNA replication and repair. During DNA replication, cleaves the 5'-overhanging flap structure that is generated by displacement synthesis when DNA polymerase encounters the 5'-end of a downstream Okazaki fragment. Binds the unpaired 3'-DNA end and kinks the DNA to facilitate 5' cleavage specificity. Cleaves one nucleotide into the double-stranded DNA from the junction in flap DNA, leaving a nick for ligation. Also involved in the base excision repair (BER) pathway. Acts as a genome stabilization factor that prevents flaps from equilibrating into structures that lead to duplications and deletions. Also possesses 5'-3' exonuclease activity on nicked or gapped double-stranded DNA. This is Flap endonuclease 1 from Caldivirga maquilingensis (strain ATCC 700844 / DSM 13496 / JCM 10307 / IC-167).